The primary structure comprises 195 residues: Probable GTP-binding protein EngB (195 aa).

Residues 24 to 195 (GLSEVALSGR…QIWDLIANYL (172 aa)) enclose the EngB-type G domain. GTP-binding positions include 32–39 (GRSNVGKS), 59–63 (GKTQT), 77–80 (DVPG), 144–147 (TKED), and 176–178 (YSS). Mg(2+) is bound by residues Ser-39 and Thr-61.

It belongs to the TRAFAC class TrmE-Era-EngA-EngB-Septin-like GTPase superfamily. EngB GTPase family. Mg(2+) is required as a cofactor.

In terms of biological role, necessary for normal cell division and for the maintenance of normal septation. The polypeptide is Probable GTP-binding protein EngB (Staphylococcus haemolyticus (strain JCSC1435)).